We begin with the raw amino-acid sequence, 71 residues long: Large ribosomal subunit protein bL28 (71 aa).

Belongs to the bacterial ribosomal protein bL28 family.

The protein is Large ribosomal subunit protein bL28 of Finegoldia magna (strain ATCC 29328 / DSM 20472 / WAL 2508) (Peptostreptococcus magnus).